The following is a 677-amino-acid chain: WD and tetratricopeptide repeats protein 1 (677 aa).

WD repeat units follow at residues 45–84, 88–129, 132–172, 182–222, and 265–305; these read GHSG…KLLS, GHTA…TIHM, DHTN…KHSE, GQLV…NHRK, and RLRV…RPYT. Residue S353 is modified to Phosphoserine. 2 TPR repeats span residues 362–395 and 397–432; these read LERV…APHN and MLYG…NPCH. Residues 487 to 509 are disordered; that stretch reads NDGEEKKGPGGGAPVRLRSTSRK. Residue S511 is modified to Phosphoserine. WD repeat units follow at residues 535 to 575 and 578 to 617; these read NTTT…LVRV and GDES…EDLT. The interval 655 to 677 is disordered; it reads SSGGAGASDDEDSSEGQVQCRPS.

The protein operates within protein modification; protein ubiquitination. May function as a substrate receptor for CUL4-DDB1 E3 ubiquitin-protein ligase complex. This Homo sapiens (Human) protein is WD and tetratricopeptide repeats protein 1 (WDTC1).